The chain runs to 447 residues: ATP-dependent protease ATPase subunit HslU (447 aa).

ATP contacts are provided by residues I17 and 59-64 (GVGKTE). Residues 136–160 (PPARGGFQGEPTAEEKPTEKKESAT) form a disordered region. Residues 148–159 (AEEKPTEKKESA) are compositionally biased toward basic and acidic residues. Residues D260, E325, and R397 each coordinate ATP.

It belongs to the ClpX chaperone family. HslU subfamily. As to quaternary structure, a double ring-shaped homohexamer of HslV is capped on each side by a ring-shaped HslU homohexamer. The assembly of the HslU/HslV complex is dependent on binding of ATP.

Its subcellular location is the cytoplasm. ATPase subunit of a proteasome-like degradation complex; this subunit has chaperone activity. The binding of ATP and its subsequent hydrolysis by HslU are essential for unfolding of protein substrates subsequently hydrolyzed by HslV. HslU recognizes the N-terminal part of its protein substrates and unfolds these before they are guided to HslV for hydrolysis. The polypeptide is ATP-dependent protease ATPase subunit HslU (Coxiella burnetii (strain RSA 331 / Henzerling II)).